Here is a 135-residue protein sequence, read N- to C-terminus: Ribosome-binding factor A (135 aa).

Positions 115 to 135 (VNEDKRKQQDSGREEDQAGEE) are disordered. A compositionally biased stretch (basic and acidic residues) spans 116–135 (NEDKRKQQDSGREEDQAGEE).

The protein belongs to the RbfA family. As to quaternary structure, monomer. Binds 30S ribosomal subunits, but not 50S ribosomal subunits or 70S ribosomes.

The protein localises to the cytoplasm. In terms of biological role, one of several proteins that assist in the late maturation steps of the functional core of the 30S ribosomal subunit. Associates with free 30S ribosomal subunits (but not with 30S subunits that are part of 70S ribosomes or polysomes). Required for efficient processing of 16S rRNA. May interact with the 5'-terminal helix region of 16S rRNA. This chain is Ribosome-binding factor A, found in Vibrio campbellii (strain ATCC BAA-1116).